A 145-amino-acid chain; its full sequence is Gene 34.1 protein (145 aa).

Its function is as follows. Putative excisionase. The polypeptide is Gene 34.1 protein (34.1) (Mycobacterium (Mycobacteriophage D29)).